A 555-amino-acid polypeptide reads, in one-letter code: Formate--tetrahydrofolate ligase (555 aa).

65 to 72 lines the ATP pocket; that stretch reads TPAGEGKS.

This sequence belongs to the formate--tetrahydrofolate ligase family.

The enzyme catalyses (6S)-5,6,7,8-tetrahydrofolate + formate + ATP = (6R)-10-formyltetrahydrofolate + ADP + phosphate. It participates in one-carbon metabolism; tetrahydrofolate interconversion. In Staphylococcus carnosus (strain TM300), this protein is Formate--tetrahydrofolate ligase.